Consider the following 163-residue polypeptide: Allophycocyanin alpha-B chain (163 aa).

N4-methylasparagine is present on Asn-71. Cys-81 serves as a coordination point for (2R,3E)-phycocyanobilin.

It belongs to the phycobiliprotein family. In terms of assembly, heterodimer of an alpha and a beta chain. Post-translationally, contains one covalently linked bilin chromophore.

The protein resides in the cellular thylakoid membrane. Its function is as follows. Light-harvesting photosynthetic bile pigment-protein from the phycobiliprotein complex. Allophycocyanin has a maximum absorption at approximately 650 nanometers. The protein is Allophycocyanin alpha-B chain of Synechococcus sp. (strain ATCC 27144 / PCC 6301 / SAUG 1402/1) (Anacystis nidulans).